Reading from the N-terminus, the 200-residue chain is Peptidyl-tRNA hydrolase (200 aa).

Residue Y15 coordinates tRNA. Catalysis depends on H20, which acts as the Proton acceptor. Residues Y66, N68, and N114 each coordinate tRNA.

The protein belongs to the PTH family. As to quaternary structure, monomer.

It is found in the cytoplasm. The catalysed reaction is an N-acyl-L-alpha-aminoacyl-tRNA + H2O = an N-acyl-L-amino acid + a tRNA + H(+). Its function is as follows. Hydrolyzes ribosome-free peptidyl-tRNAs (with 1 or more amino acids incorporated), which drop off the ribosome during protein synthesis, or as a result of ribosome stalling. In terms of biological role, catalyzes the release of premature peptidyl moieties from peptidyl-tRNA molecules trapped in stalled 50S ribosomal subunits, and thus maintains levels of free tRNAs and 50S ribosomes. In Paraburkholderia phytofirmans (strain DSM 17436 / LMG 22146 / PsJN) (Burkholderia phytofirmans), this protein is Peptidyl-tRNA hydrolase.